Consider the following 348-residue polypeptide: Sulfate/thiosulfate import ATP-binding protein CysA (348 aa).

One can recognise an ABC transporter domain in the interval 3-237; sequence IEIRNITKSF…PATPFVCQFI (235 aa). 35-42 is a binding site for ATP; it reads GPSGCGKT.

It belongs to the ABC transporter superfamily. Sulfate/tungstate importer (TC 3.A.1.6) family. As to quaternary structure, the complex is composed of two ATP-binding proteins (CysA), two transmembrane proteins (CysT and CysW) and a solute-binding protein (CysP).

Its subcellular location is the cell inner membrane. It carries out the reaction sulfate(out) + ATP + H2O = sulfate(in) + ADP + phosphate + H(+). It catalyses the reaction thiosulfate(out) + ATP + H2O = thiosulfate(in) + ADP + phosphate + H(+). In terms of biological role, part of the ABC transporter complex CysAWTP involved in sulfate/thiosulfate import. Responsible for energy coupling to the transport system. The chain is Sulfate/thiosulfate import ATP-binding protein CysA from Methylococcus capsulatus (strain ATCC 33009 / NCIMB 11132 / Bath).